The primary structure comprises 213 residues: Ribosomal RNA large subunit methyltransferase E (213 aa).

Positions 60, 62, 80, 96, and 121 each coordinate S-adenosyl-L-methionine. Residue lysine 161 is the Proton acceptor of the active site.

The protein belongs to the class I-like SAM-binding methyltransferase superfamily. RNA methyltransferase RlmE family.

Its subcellular location is the cytoplasm. The enzyme catalyses uridine(2552) in 23S rRNA + S-adenosyl-L-methionine = 2'-O-methyluridine(2552) in 23S rRNA + S-adenosyl-L-homocysteine + H(+). Functionally, specifically methylates the uridine in position 2552 of 23S rRNA at the 2'-O position of the ribose in the fully assembled 50S ribosomal subunit. This Xylella fastidiosa (strain 9a5c) protein is Ribosomal RNA large subunit methyltransferase E.